We begin with the raw amino-acid sequence, 202 residues long: LexA repressor (202 aa).

Residues Arg-28–Lys-48 constitute a DNA-binding region (H-T-H motif). Residues Ser-119 and Lys-156 each act as for autocatalytic cleavage activity in the active site.

It belongs to the peptidase S24 family. In terms of assembly, homodimer.

It carries out the reaction Hydrolysis of Ala-|-Gly bond in repressor LexA.. In terms of biological role, represses a number of genes involved in the response to DNA damage (SOS response), including recA and lexA. Binds to the 16 bp palindromic sequence 5'-CTGTATATATATACAG-3'. In the presence of single-stranded DNA, RecA interacts with LexA causing an autocatalytic cleavage which disrupts the DNA-binding part of LexA, leading to derepression of the SOS regulon and eventually DNA repair. The chain is LexA repressor from Erwinia tasmaniensis (strain DSM 17950 / CFBP 7177 / CIP 109463 / NCPPB 4357 / Et1/99).